Reading from the N-terminus, the 970-residue chain is uncharacterized protein (970 aa).

The interval 942-970 (QLSFEEDGWTESEPRPVRREAHVRAKERH) is disordered. Over residues 953 to 970 (SEPRPVRREAHVRAKERH) the composition is skewed to basic and acidic residues.

This is an uncharacterized protein from Frog virus 3 (isolate Goorha) (FV-3).